The primary structure comprises 287 residues: Nucleotide-binding protein Dtpsy_0831 (287 aa).

Residue Gly-10 to Ser-17 participates in ATP binding. Asp-59–Ser-62 contributes to the GTP binding site.

The protein belongs to the RapZ-like family.

Displays ATPase and GTPase activities. This Acidovorax ebreus (strain TPSY) (Diaphorobacter sp. (strain TPSY)) protein is Nucleotide-binding protein Dtpsy_0831.